A 150-amino-acid chain; its full sequence is Bis(5'-adenosyl)-triphosphatase (150 aa).

In terms of domain architecture, HIT spans 2 to 109 (SFRFGQHLIK…LPRKAGDFPR (108 aa)). Substrate-binding positions include histidine 8, asparagine 27, glutamine 83, and 89–92 (GQTV). The Histidine triad motif motif lies at 94–98 (HVHVH). Histidine 96 functions as the Tele-AMP-histidine intermediate in the catalytic mechanism. Position 98 (histidine 98) interacts with substrate. Tyrosine 114 is subject to Phosphotyrosine; by SRC. Tyrosine 147 is subject to Phosphotyrosine.

Homodimer. Interacts with UBE2I. Interacts with MDM2. Interacts with CTNNB1. Identified in a complex with CTNNB1 and LEF1. Post-translationally, phosphorylation at Tyr-114 by SRC is required for induction of apoptosis. In terms of tissue distribution, expressed in heart, brain, lung and skeletal muscle. Particularly strong expression in liver, testis and kidney, where it is confined to the tubular epithelium.

Its subcellular location is the cytoplasm. It localises to the nucleus. It is found in the mitochondrion. The catalysed reaction is P(1),P(3)-bis(5'-adenosyl) triphosphate + H2O = AMP + ADP + 2 H(+). The enzyme catalyses adenosine 5'-phosphosulfate + H2O = sulfate + AMP + 2 H(+). It catalyses the reaction adenosine 5'-phosphosulfate + NH4(+) = adenosine 5'-phosphoramidate + sulfate + 2 H(+). It carries out the reaction adenosine 5'-phosphoramidate + H2O = AMP + NH4(+). In terms of biological role, possesses dinucleoside triphosphate hydrolase activity. Cleaves P(1)-P(3)-bis(5'-adenosyl) triphosphate (Ap3A) to yield AMP and ADP. Can also hydrolyze P(1)-P(4)-bis(5'-adenosyl) tetraphosphate (Ap4A), but has extremely low activity with ATP. Exhibits adenylylsulfatase activity, hydrolyzing adenosine 5'-phosphosulfate to yield AMP and sulfate. Exhibits adenosine 5'-monophosphoramidase activity, hydrolyzing purine nucleotide phosphoramidates with a single phosphate group such as adenosine 5'monophosphoramidate (AMP-NH2) to yield AMP and NH2. Exhibits adenylylsulfate-ammonia adenylyltransferase, catalyzing the ammonolysis of adenosine 5'-phosphosulfate resulting in the formation of adenosine 5'-phosphoramidate. Also catalyzes the ammonolysis of adenosine 5-phosphorofluoridate and diadenosine triphosphate. Modulates transcriptional activation by CTNNB1 and thereby contributes to regulate the expression of genes essential for cell proliferation and survival, such as CCND1 and BIRC5. Plays a role in the induction of apoptosis via SRC and AKT1 signaling pathways. Inhibits MDM2-mediated proteasomal degradation of p53/TP53 and thereby plays a role in p53/TP53-mediated apoptosis. Induction of apoptosis depends on the ability of FHIT to bind P(1)-P(3)-bis(5'-adenosyl) triphosphate or related compounds, but does not require its catalytic activity. Functions as a tumor suppressor. The sequence is that of Bis(5'-adenosyl)-triphosphatase (Fhit) from Mus musculus (Mouse).